Reading from the N-terminus, the 219-residue chain is Response regulator ArlR (219 aa).

The Response regulatory domain maps to 3 to 116 (NILIVEDEQN…ELLARIRAVL (114 aa)). Aspartate 52 carries the 4-aspartylphosphate modification. Residues 122–219 (KDVLDINGII…TVRGVGYVIR (98 aa)) constitute a DNA-binding region (ompR/PhoB-type).

Phosphorylated by ArlS.

Its subcellular location is the cytoplasm. Its function is as follows. Member of the two-component regulatory system ArlS/ArlR. This chain is Response regulator ArlR (arlR), found in Staphylococcus epidermidis (strain ATCC 35984 / DSM 28319 / BCRC 17069 / CCUG 31568 / BM 3577 / RP62A).